Consider the following 118-residue polypeptide: uncharacterized protein (118 aa).

A signal peptide spans 1–26; the sequence is MTKLKMLSMLTVMIASLFIFSSQALA. Positions 30–104 constitute an SH3b domain; it reads FTVSTSSGAP…VNIGYVSDTY (75 aa).

The protein to B.subtilis YraI.

This is an uncharacterized protein from Bacillus subtilis (strain 168).